The sequence spans 254 residues: CRISPR-associated endoribonuclease Cas6 1 (254 aa).

Residue Tyr-32 is the Proton acceptor of the active site. His-47 serves as the catalytic Proton donor.

It belongs to the CRISPR-associated protein Cas6/Cse3/CasE family.

Functionally, CRISPR (clustered regularly interspaced short palindromic repeat) is an adaptive immune system that provides protection against mobile genetic elements (viruses, transposable elements and conjugative plasmids). CRISPR clusters contain sequences complementary to antecedent mobile elements and target invading nucleic acids. CRISPR clusters are transcribed and processed into CRISPR RNA (crRNA). This protein processes pre-crRNA into individual crRNA units. This chain is CRISPR-associated endoribonuclease Cas6 1 (cas6a), found in Methanocaldococcus jannaschii (strain ATCC 43067 / DSM 2661 / JAL-1 / JCM 10045 / NBRC 100440) (Methanococcus jannaschii).